A 1342-amino-acid chain; its full sequence is DNA-directed RNA polymerase subunit beta (1342 aa).

It belongs to the RNA polymerase beta chain family. As to quaternary structure, the RNAP catalytic core consists of 2 alpha, 1 beta, 1 beta' and 1 omega subunit. When a sigma factor is associated with the core the holoenzyme is formed, which can initiate transcription.

The catalysed reaction is RNA(n) + a ribonucleoside 5'-triphosphate = RNA(n+1) + diphosphate. DNA-dependent RNA polymerase catalyzes the transcription of DNA into RNA using the four ribonucleoside triphosphates as substrates. This Yersinia pseudotuberculosis serotype O:1b (strain IP 31758) protein is DNA-directed RNA polymerase subunit beta.